Consider the following 95-residue polypeptide: Small ribosomal subunit protein bS18 (95 aa).

The protein belongs to the bacterial ribosomal protein bS18 family. In terms of assembly, part of the 30S ribosomal subunit. Forms a tight heterodimer with protein bS6.

Its function is as follows. Binds as a heterodimer with protein bS6 to the central domain of the 16S rRNA, where it helps stabilize the platform of the 30S subunit. The polypeptide is Small ribosomal subunit protein bS18 (Rickettsia africae (strain ESF-5)).